The primary structure comprises 210 residues: Ribosomal RNA small subunit methyltransferase G (210 aa).

S-adenosyl-L-methionine-binding positions include glycine 77, phenylalanine 82, 100-102, 128-129, and arginine 141; these read ERS and VE.

This sequence belongs to the methyltransferase superfamily. RNA methyltransferase RsmG family.

The protein localises to the cytoplasm. Its function is as follows. Specifically methylates the N7 position of a guanine in 16S rRNA. This chain is Ribosomal RNA small subunit methyltransferase G, found in Borrelia recurrentis (strain A1).